A 465-amino-acid chain; its full sequence is tRNA modification GTPase MnmE (465 aa).

Positions 21, 85, and 124 each coordinate (6S)-5-formyl-5,6,7,8-tetrahydrofolate. The TrmE-type G domain maps to 220–387; the sequence is GVPVAIIGET…LQQRLVAAAH (168 aa). Asn230 lines the K(+) pocket. GTP is bound by residues 230-235, 249-255, and 274-277; these read NAGKST, SDIHGTT, and DTAG. Ser234 contributes to the Mg(2+) binding site. Residues Ser249, Ile251, and Thr254 each coordinate K(+). Thr255 serves as a coordination point for Mg(2+). Lys465 serves as a coordination point for (6S)-5-formyl-5,6,7,8-tetrahydrofolate.

The protein belongs to the TRAFAC class TrmE-Era-EngA-EngB-Septin-like GTPase superfamily. TrmE GTPase family. As to quaternary structure, homodimer. Heterotetramer of two MnmE and two MnmG subunits. It depends on K(+) as a cofactor.

It is found in the cytoplasm. In terms of biological role, exhibits a very high intrinsic GTPase hydrolysis rate. Involved in the addition of a carboxymethylaminomethyl (cmnm) group at the wobble position (U34) of certain tRNAs, forming tRNA-cmnm(5)s(2)U34. The polypeptide is tRNA modification GTPase MnmE (Bacteroides fragilis (strain YCH46)).